A 599-amino-acid chain; its full sequence is RING finger protein unkempt (599 aa).

C3H1-type zinc fingers lie at residues 71–100, 111–141, 194–220, 230–264, and 272–300; these read YSAD…HRTA, YYKT…HGMQ, NYKT…HNSK, KYRS…HTRT, and IYKS…HVEP. S411 carries the post-translational modification Phosphoserine. Residues 556-591 form an RING-type zinc finger; the sequence is CMKCEENNRTVTLEPCNHLSICNTCAESVTECPYCQ.

It belongs to the unkempt family. As to expression, ubiquitous in most somatic tissues from syncytial embryo through to embryo stage 15. Expression becomes restricted predominantly to the CNS at stages 16 and 17.

Its subcellular location is the cytoplasm. Functionally, essential for late larval/early pupal development. This chain is RING finger protein unkempt (unk), found in Drosophila melanogaster (Fruit fly).